The primary structure comprises 1111 residues: Isoleucine--tRNA ligase (1111 aa).

The 'HIGH' region signature appears at 52–62 (PFANGLPHYGH). The 'KMSKS' region signature appears at 645 to 649 (KLSKR). Lys648 is an ATP binding site.

It belongs to the class-I aminoacyl-tRNA synthetase family. IleS type 2 subfamily. Monomer. Zn(2+) serves as cofactor.

It is found in the cytoplasm. The enzyme catalyses tRNA(Ile) + L-isoleucine + ATP = L-isoleucyl-tRNA(Ile) + AMP + diphosphate. Catalyzes the attachment of isoleucine to tRNA(Ile). As IleRS can inadvertently accommodate and process structurally similar amino acids such as valine, to avoid such errors it has two additional distinct tRNA(Ile)-dependent editing activities. One activity is designated as 'pretransfer' editing and involves the hydrolysis of activated Val-AMP. The other activity is designated 'posttransfer' editing and involves deacylation of mischarged Val-tRNA(Ile). This Wolbachia pipientis wMel protein is Isoleucine--tRNA ligase.